A 737-amino-acid polypeptide reads, in one-letter code: Dual specificity protein kinase KNS1 (737 aa).

Disordered regions lie at residues 1-33 (MSQN…SSNK) and 270-290 (SSLR…NKSN). A compositionally biased stretch (polar residues) spans 15–33 (ANMNNSTTTGPANNTSSNK). Residues 277–290 (SNGSSESASSNKSN) are compositionally biased toward low complexity. Positions 313–720 (FVVKDLLGQG…AKDALDHEWF (408 aa)) constitute a Protein kinase domain. Residues 319–327 (LGQGTFGKV) and Lys-343 each bind ATP. Asp-440 functions as the Proton acceptor in the catalytic mechanism. Thr-562 is modified (phosphothreonine).

It belongs to the protein kinase superfamily. CMGC Ser/Thr protein kinase family. Lammer subfamily. Phosphorylated (auto-) on Ser/Thr/Tyr.

The catalysed reaction is L-seryl-[protein] + ATP = O-phospho-L-seryl-[protein] + ADP + H(+). It carries out the reaction L-threonyl-[protein] + ATP = O-phospho-L-threonyl-[protein] + ADP + H(+). The enzyme catalyses L-tyrosyl-[protein] + ATP = O-phospho-L-tyrosyl-[protein] + ADP + H(+). Functionally, nonessential protein kinase. The polypeptide is Dual specificity protein kinase KNS1 (KNS1) (Saccharomyces cerevisiae (strain ATCC 204508 / S288c) (Baker's yeast)).